Here is a 114-residue protein sequence, read N- to C-terminus: Putative membrane protein insertion efficiency factor (114 aa).

Belongs to the UPF0161 family.

The protein resides in the cell inner membrane. Functionally, could be involved in insertion of integral membrane proteins into the membrane. In Wolinella succinogenes (strain ATCC 29543 / DSM 1740 / CCUG 13145 / JCM 31913 / LMG 7466 / NCTC 11488 / FDC 602W) (Vibrio succinogenes), this protein is Putative membrane protein insertion efficiency factor.